A 47-amino-acid polypeptide reads, in one-letter code: Ruminococcin-A (47 aa).

The signal sequence occupies residues 1-23 (MRNDVLTLTNPMEEKELEQILGG). T30 and T39 each carry 2,3-didehydrobutyrine. Residues 30-35 (TISHEC) constitute a cross-link (beta-methyllanthionine (Thr-Cys)). A cross-link (lanthionine (Ser-Cys)) is located at residues 32-46 (SHECNMNTWQFLFTC). A cross-link (beta-methyllanthionine (Thr-Cys)) is located at residues 45 to 47 (TCC).

Maturation of lantibiotics involves the enzymatic conversion of Thr, and Ser into dehydrated AA and the formation of thioether bonds with cysteine. This is followed by membrane translocation and cleavage of the modified precursor. In terms of processing, it is not established whether the 2,3-didehydrobutyrine is the E- or Z-isomer.

Its subcellular location is the secreted. Lanthionine-containing peptide antibiotic (lantibiotic) active on Gram-positive bacteria. The bactericidal activity of lantibiotics is based on depolarization of energized bacterial cytoplasmic membranes, initiated by the formation of aqueous transmembrane pores. Ruminococcin A is a broad spectrum bacteriocin exhibiting activity against a wide range of pathogenic clostridia and B.longum. This is Ruminococcin-A (rumA1) from Mediterraneibacter gnavus (Ruminococcus gnavus).